Reading from the N-terminus, the 176-residue chain is uncharacterized protein (176 aa).

This is an uncharacterized protein from Bacillus anthracis.